The sequence spans 874 residues: Alanine--tRNA ligase (874 aa).

Zn(2+)-binding residues include histidine 563, histidine 567, cysteine 665, and histidine 669.

It belongs to the class-II aminoacyl-tRNA synthetase family. Zn(2+) serves as cofactor.

It is found in the cytoplasm. The enzyme catalyses tRNA(Ala) + L-alanine + ATP = L-alanyl-tRNA(Ala) + AMP + diphosphate. In terms of biological role, catalyzes the attachment of alanine to tRNA(Ala) in a two-step reaction: alanine is first activated by ATP to form Ala-AMP and then transferred to the acceptor end of tRNA(Ala). Also edits incorrectly charged Ser-tRNA(Ala) and Gly-tRNA(Ala) via its editing domain. This is Alanine--tRNA ligase from Aeromonas salmonicida (strain A449).